The chain runs to 141 residues: Small ribosomal subunit protein bS18c (141 aa).

2 disordered regions span residues 14-55 (EFIA…IKPG) and 120-141 (IKRR…RPKK). A compositionally biased stretch (pro residues) spans 24–34 (PKAPLQPPLPP). Basic residues predominate over residues 35-51 (SKRKGKPPKSPRRRSSR).

It belongs to the bacterial ribosomal protein bS18 family. Part of the 30S ribosomal subunit.

The protein resides in the plastid. It is found in the chloroplast. In Pelargonium hortorum (Common geranium), this protein is Small ribosomal subunit protein bS18c.